The following is a 120-amino-acid chain: Nitrogenase-stabilizing/protective protein NifW (120 aa).

The protein belongs to the NifW family. In terms of assembly, homotrimer; associates with NifD.

May protect the nitrogenase Fe-Mo protein from oxidative damage. This is Nitrogenase-stabilizing/protective protein NifW from Rhodospirillum rubrum (strain ATCC 11170 / ATH 1.1.1 / DSM 467 / LMG 4362 / NCIMB 8255 / S1).